The chain runs to 420 residues: Phosphatidylinositol 5-phosphate 4-kinase type-2 gamma (420 aa).

Position 2 is an N-acetylalanine (A2). S26 is subject to Phosphoserine. One can recognise a PIPK domain in the interval 43-419 (AADPLVGVFL…RFLDFISNIF (377 aa)). Positions 69–75 (VMLLPDD) are required for interaction with PIP5K1A. S349 is subject to Phosphoserine.

As to quaternary structure, interacts with PIP5K1A; the interaction inhibits PIP5K1A kinase activity. Phosphorylated, phosphorylation is induced by EGF. Widely expressed, with the most abundant expression in kidney.

The protein resides in the endoplasmic reticulum. It localises to the cytoplasm. It carries out the reaction a 1,2-diacyl-sn-glycero-3-phospho-(1D-myo-inositol-5-phosphate) + ATP = a 1,2-diacyl-sn-glycero-3-phospho-(1D-myo-inositol-4,5-bisphosphate) + ADP + H(+). The catalysed reaction is 1,2-dihexadecanoyl-sn-glycero-3-phospho-(1D-myo-inositol-5-phosphate) + ATP = 1,2-dihexadecanoyl-sn-glycero-3-phospho-(1D-myo-inositol-4,5-bisphosphate) + ADP + H(+). It catalyses the reaction 1,2-dihexadecanoyl-sn-glycero-3-phospho-(1D-myo-inositol-5-phosphate) + GTP = 1,2-dihexadecanoyl-sn-glycero-3-phospho-(1D-myo-inositol-4,5-bisphosphate) + GDP + H(+). In terms of biological role, phosphatidylinositol 5-phosphate 4-kinase with low enzymatic activity. May be a GTP sensor, has higher GTP-dependent kinase activity than ATP-dependent kinase activity. PIP4Ks negatively regulate insulin signaling through a catalytic-independent mechanism. They interact with PIP5Ks and suppress PIP5K-mediated PtdIns(4,5)P2 synthesis and insulin-dependent conversion to PtdIns(3,4,5)P3. In Rattus norvegicus (Rat), this protein is Phosphatidylinositol 5-phosphate 4-kinase type-2 gamma.